A 470-amino-acid chain; its full sequence is MNVGHVVQVIGVVVDIRFPPGQVPDIYNAIKITSDKEDAFGRKIDLTLEVAQHLGNNTVRTVAMSSTDGLVRGMKAVDTGAPITCPVGRPTLGRLVDVLGQPIDGKGPIISDKRYPIHRPAPPLVEQSTKAEQLETGIKVIDLLVPFLKGGKIGLFGGAGVGKTVIVMELINNIAKQHGGISVFAGVGERTREGNDLYREMTEAGVLDKTTMVFGQMNEPPGARLRVALTGLCLAEYFRDEEGADTLLFIDNIFRFTQAGSEVSALLGRMPSAVGYQPTLATEMGQMQERITSTVKGSVTSVQAVYVPADDLTDPAPATTFAHLDGTVVLSRQIAELGIYPAVDPLDSTSRILDPLVVGNEHYQTARGVQKVLQRYKELQDIIAILGMEELSDDDKLVVARARKLQRFLSQPFHVAEAFTGMSGKFVPIKETIRGFQEILDGKHDDLPEDAFYMVGSIEEAVEKGKKLLG.

An ATP-binding site is contributed by 157-164 (GGAGVGKT).

The protein belongs to the ATPase alpha/beta chains family. As to quaternary structure, F-type ATPases have 2 components, CF(1) - the catalytic core - and CF(0) - the membrane proton channel. CF(1) has five subunits: alpha(3), beta(3), gamma(1), delta(1), epsilon(1). CF(0) has three main subunits: a(1), b(2) and c(9-12). The alpha and beta chains form an alternating ring which encloses part of the gamma chain. CF(1) is attached to CF(0) by a central stalk formed by the gamma and epsilon chains, while a peripheral stalk is formed by the delta and b chains.

The protein resides in the cell membrane. The enzyme catalyses ATP + H2O + 4 H(+)(in) = ADP + phosphate + 5 H(+)(out). Its function is as follows. Produces ATP from ADP in the presence of a proton gradient across the membrane. The catalytic sites are hosted primarily by the beta subunits. This chain is ATP synthase subunit beta, found in Pelotomaculum thermopropionicum (strain DSM 13744 / JCM 10971 / SI).